Here is a 605-residue protein sequence, read N- to C-terminus: Cystathionine gamma-synthase-like enzyme iboG1 (605 aa).

Tyr-289 lines the substrate pocket. Lys-393 carries the post-translational modification N6-(pyridoxal phosphate)lysine.

It belongs to the trans-sulfuration enzymes family. Requires pyridoxal 5'-phosphate as cofactor.

It participates in secondary metabolite biosynthesis. Functionally, cystathionine gamma-synthase-like enzyme; part of the gene cluster that mediates the biosynthesis of the psychoactive metabolites ibotenic acid and muscimol. The first committed step is glutamate hydroxylation by the 2-oxoglutarate-dependent dioxygenase iboH, and the last step is decarboxylation of ibotenic acid to muscimol by the decarboxylase iboD. The order of the intermediate reactions is somewhat ambiguous. IboA likely activates the carboxylic acid at position 5 to introduce an amide bond, and the flavin monooxygenase iboF generates the N-O bond. There are several options for the latter step. One option is that iboF directly hydroxylates the amide nitrogen formed by iboA to produce a hydroxamic acid species. Another option is that iboF hydroxylates an external N-containing compound, whose resulting N-O bond is subsequently introduced into the hydroxyglutamate scaffold. The paralogous PLP-dependent cystathionine gamma-synthase-like enzymes iboG1 and iboG2 are likely involved in substitution of the OH group at position 3 by the O-N moiety. The first cyclic intermediate is most probably tricholomic acid which is likely desaturated to ibotenic acid by the cytochrome P450 monooxygenase iboC. In Amanita muscaria (strain Koide BX008), this protein is Cystathionine gamma-synthase-like enzyme iboG1 (iboG1).